A 359-amino-acid polypeptide reads, in one-letter code: 3-dehydroquinate synthase (359 aa).

NAD(+) is bound by residues 71-76, 105-109, 129-130, Lys142, Lys151, and 169-172; these read DGEQFK, GVIGD, TT, and CLQT. 3 residues coordinate Zn(2+): Glu184, His247, and His264.

This sequence belongs to the sugar phosphate cyclases superfamily. Dehydroquinate synthase family. NAD(+) is required as a cofactor. Requires Co(2+) as cofactor. Zn(2+) serves as cofactor.

Its subcellular location is the cytoplasm. It carries out the reaction 7-phospho-2-dehydro-3-deoxy-D-arabino-heptonate = 3-dehydroquinate + phosphate. The protein operates within metabolic intermediate biosynthesis; chorismate biosynthesis; chorismate from D-erythrose 4-phosphate and phosphoenolpyruvate: step 2/7. Catalyzes the conversion of 3-deoxy-D-arabino-heptulosonate 7-phosphate (DAHP) to dehydroquinate (DHQ). This is 3-dehydroquinate synthase from Shewanella oneidensis (strain ATCC 700550 / JCM 31522 / CIP 106686 / LMG 19005 / NCIMB 14063 / MR-1).